The chain runs to 1057 residues: Outer capsid protein VP2 (1057 aa).

Belongs to the orbivirus VP2 family.

The protein resides in the virion. In terms of biological role, the VP2 protein is one of the two proteins (with VP5) which constitute the virus particle outer capsid. It is the major target of the host immunogenic response. The chain is Outer capsid protein VP2 (Segment-2) from Anas (ducks).